Consider the following 885-residue polypeptide: Initiator protein NS1 (885 aa).

A disordered region spans residues 404-477; sequence AEAGPSGTQP…GREDIFSGAP (74 aa). Positions 409-423 are enriched in polar residues; the sequence is SGTQPVETAQQSPPT. Over residues 452–465 the composition is skewed to gly residues; it reads QAAGGSEMGAGGSA.

Belongs to the parvoviruses initiator protein NS1 family. In terms of assembly, homooligomer. Mg(2+) is required as a cofactor.

The protein resides in the host nucleus. It carries out the reaction ATP + H2O = ADP + phosphate + H(+). Its function is as follows. Multifunctional protein which displays endonuclease and helicase activities required for initiating and directing viral DNA replication. Also plays a role in viral packaging and transactivation of several promoters. Binds site-specifically to 2-3 approximate tandem copies within the origins of replication (Ori), unwinds this hairpin region and nicks one DNA strand thereby initiating the rolling circle replication (RCR). This Bombyx mori densovirus (BmDNV) protein is Initiator protein NS1.